The sequence spans 360 residues: Abhydrolase domain-containing protein lid-1 (360 aa).

The AB hydrolase-1 domain occupies 73–203; the sequence is AIVFIPGLGA…MSFLGGVAGY (131 aa).

It belongs to the peptidase S33 family. ABHD4/ABHD5 subfamily. Interacts with atgl-1.

The protein localises to the lipid droplet. Acts coordinately with atgl-1 within the lipolytic cascade to distribute stored energy to tissues during nutritional deprivation. The sequence is that of Abhydrolase domain-containing protein lid-1 from Caenorhabditis elegans.